The sequence spans 259 residues: V-type proton ATPase subunit D (259 aa).

Positions 214–259 (KLKEQEAAQRALEGPPKEEAGGTHSENQPPRNLLAVEEDNLPVLFN) are disordered.

Belongs to the V-ATPase D subunit family. In terms of assembly, V-ATPase is a heteromultimeric enzyme made up of two complexes: the ATP-hydrolytic V1 complex and the proton translocation V0 complex. The V1 complex consists of three catalytic AB heterodimers that form a heterohexamer, three peripheral stalks each consisting of EG heterodimers, one central rotor including subunits D and F, and the regulatory subunits C and H. The proton translocation complex V0 consists of the proton transport subunit a, a ring of proteolipid subunits c9c'', rotary subunit d, and The proton translocation complex V0 consists of the proton transport subunit a, a ring of proteolipid subunits c9c'', rotary subunit d, subunits e and f, and the accessory subunits vah-19/Ac45 and vah-20/PRR.

Subunit of the V1 complex of vacuolar(H+)-ATPase (V-ATPase), a multisubunit enzyme composed of a peripheral complex (V1) that hydrolyzes ATP and a membrane integral complex (V0) that translocates protons. V-ATPase is responsible for acidifying and maintaining the pH of intracellular compartments and in some cell types, is targeted to the plasma membrane, where it is responsible for acidifying the extracellular environment. In Caenorhabditis briggsae, this protein is V-type proton ATPase subunit D.